The following is a 233-amino-acid chain: Germin-like protein 3-7 (233 aa).

The signal sequence occupies residues 1-35; it reads MSSSSSMECTGNMSAAPLLVLTVAVLAVLASTCAA. Residues Cys44 and Cys63 are joined by a disulfide bond. The region spanning 77-225 is the Cupin type-1 domain; it reads AGLAAAGSTD…SFQVDAEIIK (149 aa). 4 residues coordinate Mn(2+): His125, His127, Glu132, and His171. A glycan (N-linked (GlcNAc...) asparagine) is linked at Asn178.

This sequence belongs to the germin family. Oligomer (believed to be a pentamer but probably hexamer).

The protein resides in the secreted. Its subcellular location is the extracellular space. It localises to the apoplast. In terms of biological role, may play a role in plant defense. Probably has no oxalate oxidase activity even if the active site is conserved. The sequence is that of Germin-like protein 3-7 (GER7) from Oryza sativa subsp. japonica (Rice).